The following is a 167-amino-acid chain: HTH-type transcriptional repressor YetL (167 aa).

An HTH marR-type domain is found at S26–E160. Residues P74–R97 constitute a DNA-binding region (H-T-H motif).

Homodimer. The N- and C-terminal helices from both subunits stabilize YetL dimer via extensive intersubunit interactions.

With respect to regulation, binding to the yetM cis sequence is clearly inhibited by kaempferol, morin, apigenin and luteolin, slightly inhibited by quercetin and galangin, but no inhibition is observed with the other flavonoids. Flavonoid binding may induce conformational changes and modulate interaction with DNA. In terms of biological role, negatively regulates yetM expression and its own expression. Binds specifically to corresponding single sites in the divergent yetL and yetM promoter regions, with higher affinity to the yetM region. Recognizes a 28-mer operator of double-stranded DNA that contains a palindromic sequence. The polypeptide is HTH-type transcriptional repressor YetL (yetL) (Bacillus subtilis (strain 168)).